A 102-amino-acid chain; its full sequence is Large ribosomal subunit protein bL21 (102 aa).

The segment covering 80–91 (KNSKRKKGHRQP) has biased composition (basic residues). Residues 80 to 102 (KNSKRKKGHRQPYTKLTIDKINA) are disordered.

It belongs to the bacterial ribosomal protein bL21 family. Part of the 50S ribosomal subunit. Contacts protein L20.

In terms of biological role, this protein binds to 23S rRNA in the presence of protein L20. The chain is Large ribosomal subunit protein bL21 from Staphylococcus aureus (strain Mu3 / ATCC 700698).